Consider the following 174-residue polypeptide: CDP-archaeol synthase (174 aa).

5 helical membrane passes run 14-34 (ILEA…PVVA), 59-79 (IEGL…AALA), 83-103 (MLLA…DMAG), 118-138 (APLL…IALG), and 149-169 (AAAA…LLGL).

This sequence belongs to the CDP-archaeol synthase family. The cofactor is Mg(2+).

It localises to the cell membrane. The enzyme catalyses 2,3-bis-O-(geranylgeranyl)-sn-glycerol 1-phosphate + CTP + H(+) = CDP-2,3-bis-O-(geranylgeranyl)-sn-glycerol + diphosphate. It functions in the pathway membrane lipid metabolism; glycerophospholipid metabolism. Its function is as follows. Catalyzes the formation of CDP-2,3-bis-(O-geranylgeranyl)-sn-glycerol (CDP-archaeol) from 2,3-bis-(O-geranylgeranyl)-sn-glycerol 1-phosphate (DGGGP) and CTP. This reaction is the third ether-bond-formation step in the biosynthesis of archaeal membrane lipids. The protein is CDP-archaeol synthase of Aeropyrum pernix (strain ATCC 700893 / DSM 11879 / JCM 9820 / NBRC 100138 / K1).